The chain runs to 127 residues: Vacuolar ATPase assembly integral membrane protein VMA21 (127 aa).

The tract at residues 1–28 is disordered; the sequence is MATRRNPTKESITTSPPPDQQPRQPGEL. The Cytoplasmic portion of the chain corresponds to 1 to 45; it reads MATRRNPTKESITTSPPPDQQPRQPGELEHREAIQLRDLPGYPQQ. Residues 46–66 traverse the membrane as a helical segment; the sequence is VLWKLIIYSIAVLVLPLSAYF. Topologically, residues 67 to 79 are lumenal; the sequence is YSVNYVFDGNTTY. A helical transmembrane segment spans residues 80 to 100; it reads AGATAAITANLILFSYIVVAM. At 101 to 127 the chain is on the cytoplasmic side; it reads REDKGDQEQLREQQQLRGNKEETKKMK. The segment at 107-127 is disordered; sequence QEQLREQQQLRGNKEETKKMK. Positions 118–127 are enriched in basic and acidic residues; it reads GNKEETKKMK. Residues 124–127 carry the Prevents secretion from ER motif; sequence KKMK.

The protein belongs to the VMA21 family.

It localises to the endoplasmic reticulum membrane. Its subcellular location is the endoplasmic reticulum-Golgi intermediate compartment membrane. The protein resides in the cytoplasmic vesicle. The protein localises to the COPII-coated vesicle membrane. Functionally, required for the assembly of the V0 complex of the vacuolar ATPase (V-ATPase) in the endoplasmic reticulum. The sequence is that of Vacuolar ATPase assembly integral membrane protein VMA21 from Coccidioides immitis (strain RS) (Valley fever fungus).